A 244-amino-acid chain; its full sequence is Phosphoadenosine 5'-phosphosulfate reductase (244 aa).

Cys239 functions as the Nucleophile; cysteine thiosulfonate intermediate in the catalytic mechanism.

This sequence belongs to the PAPS reductase family. CysH subfamily.

The protein resides in the cytoplasm. The catalysed reaction is [thioredoxin]-disulfide + sulfite + adenosine 3',5'-bisphosphate + 2 H(+) = [thioredoxin]-dithiol + 3'-phosphoadenylyl sulfate. It participates in sulfur metabolism; hydrogen sulfide biosynthesis; sulfite from sulfate: step 3/3. Catalyzes the formation of sulfite from phosphoadenosine 5'-phosphosulfate (PAPS) using thioredoxin as an electron donor. This chain is Phosphoadenosine 5'-phosphosulfate reductase, found in Salmonella schwarzengrund (strain CVM19633).